The chain runs to 504 residues: ATP synthase subunit alpha 2 (504 aa).

169-176 provides a ligand contact to ATP; the sequence is GDRQTGKT.

Belongs to the ATPase alpha/beta chains family. In terms of assembly, F-type ATPases have 2 components, CF(1) - the catalytic core - and CF(0) - the membrane proton channel. CF(1) has five subunits: alpha(3), beta(3), gamma(1), delta(1), epsilon(1). CF(0) has three main subunits: a(1), b(2) and c(9-12). The alpha and beta chains form an alternating ring which encloses part of the gamma chain. CF(1) is attached to CF(0) by a central stalk formed by the gamma and epsilon chains, while a peripheral stalk is formed by the delta and b chains.

It localises to the cell membrane. The enzyme catalyses ATP + H2O + 4 H(+)(in) = ADP + phosphate + 5 H(+)(out). Its function is as follows. Produces ATP from ADP in the presence of a proton gradient across the membrane. The alpha chain is a regulatory subunit. The sequence is that of ATP synthase subunit alpha 2 from Listeria innocua serovar 6a (strain ATCC BAA-680 / CLIP 11262).